The following is a 476-amino-acid chain: Argininosuccinate lyase (476 aa).

The protein belongs to the lyase 1 family. Argininosuccinate lyase subfamily.

It is found in the cytoplasm. The enzyme catalyses 2-(N(omega)-L-arginino)succinate = fumarate + L-arginine. Its pathway is amino-acid biosynthesis; L-arginine biosynthesis; L-arginine from L-ornithine and carbamoyl phosphate: step 3/3. The protein is Argininosuccinate lyase of Thermobifida fusca (strain YX).